A 645-amino-acid chain; its full sequence is MRPRKAFLLLLLLGLVQLLAVAGAEGPDEDSSNRENAIEDEEEEEEEDDDEEEDDLEVKEENGVLVLNDANFDNFVADKDTVLLEFYAPWCGHCKQFAPEYEKIANILKDKDPPIPVAKIDATSASVLASRFDVSGYPTIKILKKGQAVDYEGSRTQEEIVAKVREVSQPDWTPPPEVTLVLTKENFDEVVNDADIILVEFYAPWCGHCKKLAPEYEKAAKELSKRSPPIPLAKVDATAETDLAKRFDVSGYPTLKIFRKGRPYDYNGPREKYGIVDYMIEQSGPPSKEILTLKQVQEFLKDGDDVIIIGVFKGESDPAYQQYQDAANNLREDYKFHHTFSTEIAKFLKVSQGQLVVMQPEKFQSKYEPRSHMMDVQGSTQDSAIKDFVLKYALPLVGHRKVSNDAKRYTRRPLVVVYYSVDFSFDYRAATQFWRSKVLEVAKDFPEYTFAIADEEDYAGEVKDLGLSESGEDVNAAILDESGKKFAMEPEEFDSDTLREFVTAFKKGKLKPVIKSQPVPKNNKGPVKVVVGKTFDSIVMDPKKDVLIEFYAPWCGHCKQLEPVYNSLAKKYKGQKGLVIAKMDATANDVPSDRYKVEGFPTIYFAPSGDKKNPVKFEGGDRDLEHLSKFIEEHATKLSRTKEEL.

A signal peptide spans 1–20 (MRPRKAFLLLLLLGLVQLLA). Thioredoxin domains lie at 21–169 (VAGA…EVSQ) and 158–301 (EEIV…EFLK). Residues 24-58 (AEGPDEDSSNRENAIEDEEEEEEEDDDEEEDDLEV) are disordered. Residues 38–58 (IEDEEEEEEEDDDEEEDDLEV) are compositionally biased toward acidic residues. A CXXC motif is present at residues 91–94 (CGHC). Cystine bridges form between Cys91-Cys94 and Cys206-Cys209. At Lys366 the chain carries N6-acetyllysine. Positions 505-636 (FKKGKLKPVI…LSKFIEEHAT (132 aa)) constitute a Thioredoxin 3 domain. Positions 555 to 558 (CGHC) match the CXXC motif. A disulfide bridge connects residues Cys555 and Cys558. A Prevents secretion from ER motif is present at residues 642 to 645 (KEEL).

The protein belongs to the protein disulfide isomerase family. As to quaternary structure, part of a large chaperone multiprotein complex comprising DNAJB11, HSP90B1, HSPA5, HYOU, PDIA2, PDIA4, PDIA6, PPIB, SDF2L1, UGGT1 and very small amounts of ERP29, but not, or at very low levels, CALR nor CANX. Component of a complex containing at least CRELD2, MANF, MATN3 and PDIA4. In terms of assembly, (Microbial infection) Interacts with Human astrovirus-1 and Human astrovirus-8 spike protein VP25; this interaction seems to facilitate the uncoating during virus entry into the cell. Does not interact with Human astrovirus-2 spike protein VP25.

The protein localises to the endoplasmic reticulum lumen. The protein resides in the melanosome. The catalysed reaction is Catalyzes the rearrangement of -S-S- bonds in proteins.. The polypeptide is Protein disulfide-isomerase A4 (PDIA4) (Homo sapiens (Human)).